Here is a 1160-residue protein sequence, read N- to C-terminus: DNA polymerase III subunit alpha (1160 aa).

It belongs to the DNA polymerase type-C family. DnaE subfamily. As to quaternary structure, the DNA polymerase III holoenzyme complex contains at least 10 different subunits organized into 3 functionally essential subassemblies: the Pol III core, the beta sliding clamp processivity factor and the clamp-loading complex. The Pol III core (subunits alpha, epsilon and theta) contains the polymerase and the 3'-5' exonuclease proofreading activities. The polymerase is tethered to the template via the dimeric beta sliding clamp processivity factor. The clamp loader (also called gamma complex) assembles the beta sliding clamp onto the primed template and plays a central role in the organization and communication at the replication fork. The clamp-loading complex contains delta, delta', psi and chi, and 3 copies of either or both of two different DnaX proteins, gamma and tau. The DNA replisome complex has a single clamp loader (3 tau and 1 each of delta, delta', psi and chi subunits) which binds 3 Pol III cores (1 core on the leading strand and 2 on the lagging strand) each with a beta sliding clamp dimer. Additional proteins in the replisome are other copies of gamma, psi and chi, Ssb, DNA helicase and RNA primase. Interacts with the beta sliding-clamp subunit via the peptide Gln-Ala-Asp-Met-Phe (residues 920-924).

The protein localises to the cytoplasm. The enzyme catalyses DNA(n) + a 2'-deoxyribonucleoside 5'-triphosphate = DNA(n+1) + diphosphate. Functionally, DNA polymerase III is a complex, multichain enzyme responsible for most of the replicative synthesis in bacteria. This DNA polymerase also exhibits 3' to 5' exonuclease activity. The alpha chain is the DNA polymerase catalytic subunit. It is tethered to replicating DNA by the beta sliding clamp (dnaN), which confers extremely high processivity to the catalytic subunit, copying a 5.4 kb genome in 11 seconds, a speed of at least 500 nucleotides/second at 30 degrees Celsius. The polypeptide is DNA polymerase III subunit alpha (dnaE) (Escherichia coli (strain K12)).